A 91-amino-acid chain; its full sequence is Putative regulatory protein Helmi_20580 (91 aa).

It belongs to the RemA family.

This is Putative regulatory protein Helmi_20580 from Heliobacterium modesticaldum (strain ATCC 51547 / Ice1).